The sequence spans 413 residues: Ferredoxin--NADP reductase (413 aa).

Met1 is subject to N-acetylmethionine. The CpcD-like domain maps to 18-76; that stretch reads NRLFVYEVIGLSQSTMTDGLDYPIRRSGSTFITVPLKRMNQEMRRITRMGGKIVSIKPL. Positions 74–120 are disordered; that stretch reads KPLEGDSPLPHTEGIAKPSQSEGSGSEAVANPAPESNKTMTTTPKEK. Positions 107–116 are enriched in polar residues; sequence PESNKTMTTT. In terms of domain architecture, FAD-binding FR-type spans 133 to 256; that stretch reads KTPYIGKVLE…TGPVGKEMLL (124 aa). FAD-binding positions include 192-195, 213-215, Tyr219, 230-232, and Thr271; these read RLYS, CVR, and VCS. The NADP(+) site is built by Ser195 and Arg215. NADP(+) is bound by residues Thr271, 303–304, 333–334, 343–347, 372–373, and Glu411; these read IP, SR, RMYIQ, and GL.

Belongs to the ferredoxin--NADP reductase type 1 family. As to quaternary structure, purifies with both the classic phycobilisome (PBS) supercomplex (CpcG-PBS) and a photosystem I-associated PBS called CpcL-PBS; it accumulates to a higher level in CpcL-PBS. In both PBS it can be cross-linked to both phycocyanin subunits. FAD is required as a cofactor. Acetylated at the N-terminus; 6% of protein in CpcG-PBS and 12% of protein in CpcL-PBS is acetylated.

The protein resides in the cellular thylakoid membrane. The catalysed reaction is 2 reduced [2Fe-2S]-[ferredoxin] + NADP(+) + H(+) = 2 oxidized [2Fe-2S]-[ferredoxin] + NADPH. The polypeptide is Ferredoxin--NADP reductase (Synechocystis sp. (strain ATCC 27184 / PCC 6803 / Kazusa)).